A 424-amino-acid chain; its full sequence is Putative glutamate--cysteine ligase 2-3 (424 aa).

Disordered regions lie at residues Met1–Val20 and Gly405–Pro424.

It belongs to the glutamate--cysteine ligase type 2 family. YbdK subfamily.

It carries out the reaction L-cysteine + L-glutamate + ATP = gamma-L-glutamyl-L-cysteine + ADP + phosphate + H(+). In terms of biological role, ATP-dependent carboxylate-amine ligase which exhibits weak glutamate--cysteine ligase activity. In Paenarthrobacter aurescens (strain TC1), this protein is Putative glutamate--cysteine ligase 2-3.